The primary structure comprises 175 residues: Ribosome maturation factor RimM (175 aa).

Residues 96–175 (DGDYYWKDLI…IIKVDWDPEF (80 aa)) form the PRC barrel domain.

This sequence belongs to the RimM family. In terms of assembly, binds ribosomal protein uS19.

It localises to the cytoplasm. Its function is as follows. An accessory protein needed during the final step in the assembly of 30S ribosomal subunit, possibly for assembly of the head region. Essential for efficient processing of 16S rRNA. May be needed both before and after RbfA during the maturation of 16S rRNA. It has affinity for free ribosomal 30S subunits but not for 70S ribosomes. The protein is Ribosome maturation factor RimM of Baumannia cicadellinicola subsp. Homalodisca coagulata.